A 566-amino-acid polypeptide reads, in one-letter code: Serine/threonine-protein kinase haspin homolog (566 aa).

Positions 248 to 566 constitute a Protein kinase domain; it reads LLNTKKIGEG…HCANYLFNLN (319 aa). Residues 254–262, K282, 377–382, 418–423, and 456–458 each bind ATP; these read IGEGAYGEV, KFAGSD, DLHLGN, and DYT. The active-site Proton acceptor is D418.

The protein belongs to the protein kinase superfamily. Ser/Thr protein kinase family. Haspin subfamily. Interacts with pds5 and vtd. Mg(2+) is required as a cofactor.

The protein resides in the nucleus lamina. Its subcellular location is the chromosome. It localises to the cytoplasm. The protein localises to the cytoskeleton. It is found in the spindle. The enzyme catalyses L-seryl-[protein] + ATP = O-phospho-L-seryl-[protein] + ADP + H(+). It carries out the reaction L-threonyl-[protein] + ATP = O-phospho-L-threonyl-[protein] + ADP + H(+). Functionally, serine/threonine-protein kinase that phosphorylates histone H3 at 'Thr-4' (H3T3ph) during mitosis and interphase. Function is essential for chromosome organization during mitosis and genome organization in interphase cells, thus playing a functional role in gene regulation. During mitosis, may act through H3T3ph to both position and modulate activation of AURKB and other components of the chromosomal passenger complex (CPC) at centromeres to ensure proper chromatid cohesion, metaphase alignment and normal progression through the cell cycle. During interphase, associates with the cohesion complex and mediates pds5 binding to chromatin to ensure correct sister chromatid cohesion, chromatin organization, and also functions with Pds5-cohesin to modify Polycomb-dependent homeotic transformations. Function during interphase is required for insulator activity, nuclear compaction, heterochromatin-induced position-effect variegation and PcG-mediated pairing-sensitive silencing. The chain is Serine/threonine-protein kinase haspin homolog from Drosophila melanogaster (Fruit fly).